A 130-amino-acid chain; its full sequence is MYSEVTRSIRVTVRPEYLAQQSQPEERRFVWAYHVRIENEGLETVQLRTRHWQVTDAQGRVQEVRGPGVVGEQPVLRPGEAFEYTSGTPLPTPSGFMVGSYGMVTASGEAFEVRIPAFSLDSPHGRSRPN.

Residues 3-127 enclose the ApaG domain; the sequence is SEVTRSIRVT…FSLDSPHGRS (125 aa).

In Rhodospirillum centenum (strain ATCC 51521 / SW), this protein is Protein ApaG.